A 299-amino-acid polypeptide reads, in one-letter code: Tyrosine recombinase XerC (299 aa).

In terms of domain architecture, Core-binding (CB) spans 1 to 85; that stretch reads MERQLEAYCA…AVRGLYRYLN (85 aa). In terms of domain architecture, Tyr recombinase spans 106–285; that stretch reads RLPKVLDTDR…DFQHLAAVYD (180 aa). Catalysis depends on residues Arg-146, Lys-170, His-237, Arg-240, and His-263. Tyr-272 (O-(3'-phospho-DNA)-tyrosine intermediate) is an active-site residue.

Belongs to the 'phage' integrase family. XerC subfamily. In terms of assembly, forms a cyclic heterotetrameric complex composed of two molecules of XerC and two molecules of XerD.

It localises to the cytoplasm. Site-specific tyrosine recombinase, which acts by catalyzing the cutting and rejoining of the recombining DNA molecules. The XerC-XerD complex is essential to convert dimers of the bacterial chromosome into monomers to permit their segregation at cell division. It also contributes to the segregational stability of plasmids. The sequence is that of Tyrosine recombinase XerC from Pseudomonas putida (strain W619).